Consider the following 442-residue polypeptide: NALCN channel auxiliary factor 2 (442 aa).

A helical transmembrane segment spans residues 42-62; it reads LASLLFFTVLLSNHLWLVSAG. N-linked (GlcNAc...) asparagine glycans are attached at residues N77, N100, N171, N279, and N354. A helical membrane pass occupies residues 406-426; that stretch reads CVLVLMLLHTMASFSVVQNGV.

This sequence belongs to the NALF family.

It localises to the membrane. In terms of biological role, probable component of the NALCN channel complex, a channel that regulates the resting membrane potential and controls neuronal excitability. This chain is NALCN channel auxiliary factor 2 (nalf2), found in Xenopus tropicalis (Western clawed frog).